Here is an 874-residue protein sequence, read N- to C-terminus: MIRTFATIANRGPGIRLATLAASRNLGYSSGGRISSVRIEKLRFSPFRSSTSLRYTSDIQHVMQEADSLDVNNSVSNTGVLDYDRKNAVVLYFDHIYPFSVSRYSWKQYFTLLFPVNRCSEDDIRERVMNLSSTEKEPLPKDVRILELVPMRRDGGVFVKFQLPATMSARELVGLICQNTKENEQAYGERFLVGPLNKIWNHFPRCFQVKGTPWIEDLRRFPSVKLSVKFEGERLTEEELYVLFRRYGLIIDIAPGSGTEPAVIHFRKIRSAICAKNCVTGITLNSGNTVVHIQYLPLKRVNYITDFIGNHQRIAIPIILALLATAAVFIFDPIREWFIMQNVSHRHALDSYKDNKFLKLVSLPYEQVRRWIDSGYDYFDSKFGCDEEDEFGGEKGEAPNDLWSERYEKVKQLKLWIYENINTFIIVRGPKGSGKEELVLEHTLRDDPILGNKLLYIDCEALVKSRSDNALIEATAQQLGYFPVFTWTNSISQFVDLGVQGLTGQKSGLSESKETQLKNMFGLTSSAIRKLALQDYAKYKKSVLRQRRRQQGDSTSEDILSEDEYLSQHPERKPVIVIDKFAGRADGDQDFIFKMISEWSAQLVQSNLAHVIILTHDVGSMSHLTSALPNQVMKSISLSDASQRSARHYVLNQLNKESQAQVNELDSCLEPLGGRMLDLQAFVRRMRSGEAPGDALEEMVSQASEQITTFFLSASSTQNSWSTAQVWLLIKLLAKQESISYETLCHDPLFKSPDSLSILSTLEKHDLISLISDKGVLNTVSTGRPLYKAAFRSLVEDPKIFRIYEEDLYNKLIALENAKIAKLEDEFAKLASVDARLVRNRLDYVSNKIVASTDKITDYEEKISGLSSKKSSWF.

The N-terminal 55 residues, 1 to 55 (MIRTFATIANRGPGIRLATLAASRNLGYSSGGRISSVRIEKLRFSPFRSSTSLRY), are a transit peptide targeting the mitochondrion. Residues 56–313 (TSDIQHVMQE…ITDFIGNHQR (258 aa)) are Mitochondrial matrix-facing. The RRM domain maps to 224-297 (VKLSVKFEGE…NTVVHIQYLP (74 aa)). A helical transmembrane segment spans residues 314 to 334 (IAIPIILALLATAAVFIFDPI). Topologically, residues 335–874 (REWFIMQNVS…GLSSKKSSWF (540 aa)) are mitochondrial intermembrane. Residues 547-566 (RRRQQGDSTSEDILSEDEYL) are disordered. The span at 555–565 (TSEDILSEDEY) shows a compositional bias: acidic residues.

It belongs to the YME2 family.

The protein localises to the mitochondrion inner membrane. In terms of biological role, plays a role in maintaining the mitochondrial genome and in controlling the mtDNA escape. Involved in the regulation of mtDNA nucleotide structure and number. May have a dispensable role in early maturation of pre-rRNA. In Meyerozyma guilliermondii (strain ATCC 6260 / CBS 566 / DSM 6381 / JCM 1539 / NBRC 10279 / NRRL Y-324) (Yeast), this protein is Mitochondrial escape protein 2 (YME2).